The following is a 158-amino-acid chain: Transcription elongation factor GreA (158 aa).

Belongs to the GreA/GreB family.

Necessary for efficient RNA polymerase transcription elongation past template-encoded arresting sites. The arresting sites in DNA have the property of trapping a certain fraction of elongating RNA polymerases that pass through, resulting in locked ternary complexes. Cleavage of the nascent transcript by cleavage factors such as GreA or GreB allows the resumption of elongation from the new 3'terminus. GreA releases sequences of 2 to 3 nucleotides. The chain is Transcription elongation factor GreA from Polaromonas naphthalenivorans (strain CJ2).